Reading from the N-terminus, the 685-residue chain is UvrABC system protein C (685 aa).

The region spanning 15–93 (ALPGVYRYFD…IKTQNPRFNI (79 aa)) is the GIY-YIG domain. In terms of domain architecture, UVR spans 214–249 (QELLQAMEARMMAYSGQLAFEQAAEVRNQMQALSRV). Positions 365–388 (AQGGDHAPAAQGGDPPPAASSGGH) are enriched in low complexity. Residues 365–391 (AQGGDHAPAAQGGDPPPAASSGGHPLR) form a disordered region.

It belongs to the UvrC family. Interacts with UvrB in an incision complex.

It localises to the cytoplasm. Functionally, the UvrABC repair system catalyzes the recognition and processing of DNA lesions. UvrC both incises the 5' and 3' sides of the lesion. The N-terminal half is responsible for the 3' incision and the C-terminal half is responsible for the 5' incision. This Verminephrobacter eiseniae (strain EF01-2) protein is UvrABC system protein C.